A 186-amino-acid polypeptide reads, in one-letter code: dCTP deaminase (186 aa).

K107 to R112 contacts dCTP. Residue E133 is the Proton donor/acceptor of the active site. The dCTP site is built by Q152, Y166, and Q176.

It belongs to the dCTP deaminase family. Homotrimer.

The enzyme catalyses dCTP + H2O + H(+) = dUTP + NH4(+). Its pathway is pyrimidine metabolism; dUMP biosynthesis; dUMP from dCTP (dUTP route): step 1/2. Catalyzes the deamination of dCTP to dUTP. The protein is dCTP deaminase of Campylobacter jejuni (strain RM1221).